The chain runs to 470 residues: Glutamate--tRNA ligase (470 aa).

The 'HIGH' region signature appears at 9-19 (PSPTGYLHVGG). The 'KMSKS' region motif lies at 236 to 240 (RLSKR). ATP is bound at residue K239.

It belongs to the class-I aminoacyl-tRNA synthetase family. Glutamate--tRNA ligase type 1 subfamily. In terms of assembly, monomer.

It is found in the cytoplasm. It catalyses the reaction tRNA(Glu) + L-glutamate + ATP = L-glutamyl-tRNA(Glu) + AMP + diphosphate. Functionally, catalyzes the attachment of glutamate to tRNA(Glu) in a two-step reaction: glutamate is first activated by ATP to form Glu-AMP and then transferred to the acceptor end of tRNA(Glu). The protein is Glutamate--tRNA ligase of Colwellia psychrerythraea (strain 34H / ATCC BAA-681) (Vibrio psychroerythus).